A 156-amino-acid chain; its full sequence is Small ribosomal subunit protein uS7 (156 aa).

Belongs to the universal ribosomal protein uS7 family. Part of the 30S ribosomal subunit. Contacts proteins S9 and S11.

One of the primary rRNA binding proteins, it binds directly to 16S rRNA where it nucleates assembly of the head domain of the 30S subunit. Is located at the subunit interface close to the decoding center, probably blocks exit of the E-site tRNA. The sequence is that of Small ribosomal subunit protein uS7 from Clostridium kluyveri (strain NBRC 12016).